The primary structure comprises 226 residues: Phosphoribosylformylglycinamidine synthase subunit PurQ (226 aa).

Positions 2 to 225 (RFGIVVFPGS…MHYLEGGKNN (224 aa)) constitute a Glutamine amidotransferase type-1 domain. The active-site Nucleophile is C86. Catalysis depends on residues H194 and E196.

Part of the FGAM synthase complex composed of 1 PurL, 1 PurQ and 2 PurS subunits.

The protein localises to the cytoplasm. It carries out the reaction N(2)-formyl-N(1)-(5-phospho-beta-D-ribosyl)glycinamide + L-glutamine + ATP + H2O = 2-formamido-N(1)-(5-O-phospho-beta-D-ribosyl)acetamidine + L-glutamate + ADP + phosphate + H(+). It catalyses the reaction L-glutamine + H2O = L-glutamate + NH4(+). The protein operates within purine metabolism; IMP biosynthesis via de novo pathway; 5-amino-1-(5-phospho-D-ribosyl)imidazole from N(2)-formyl-N(1)-(5-phospho-D-ribosyl)glycinamide: step 1/2. Functionally, part of the phosphoribosylformylglycinamidine synthase complex involved in the purines biosynthetic pathway. Catalyzes the ATP-dependent conversion of formylglycinamide ribonucleotide (FGAR) and glutamine to yield formylglycinamidine ribonucleotide (FGAM) and glutamate. The FGAM synthase complex is composed of three subunits. PurQ produces an ammonia molecule by converting glutamine to glutamate. PurL transfers the ammonia molecule to FGAR to form FGAM in an ATP-dependent manner. PurS interacts with PurQ and PurL and is thought to assist in the transfer of the ammonia molecule from PurQ to PurL. The chain is Phosphoribosylformylglycinamidine synthase subunit PurQ from Alkaliphilus metalliredigens (strain QYMF).